Consider the following 217-residue polypeptide: tRNA (guanine-N(7)-)-methyltransferase (217 aa).

The S-adenosyl-L-methionine site is built by Glu-56, Glu-81, Asp-108, and Asp-130. Residue Asp-130 is part of the active site. Substrate is bound by residues Lys-134 and Asp-166.

It belongs to the class I-like SAM-binding methyltransferase superfamily. TrmB family.

The catalysed reaction is guanosine(46) in tRNA + S-adenosyl-L-methionine = N(7)-methylguanosine(46) in tRNA + S-adenosyl-L-homocysteine. It participates in tRNA modification; N(7)-methylguanine-tRNA biosynthesis. In terms of biological role, catalyzes the formation of N(7)-methylguanine at position 46 (m7G46) in tRNA. The polypeptide is tRNA (guanine-N(7)-)-methyltransferase (Neorickettsia sennetsu (strain ATCC VR-367 / Miyayama) (Ehrlichia sennetsu)).